Consider the following 691-residue polypeptide: Pentatricopeptide repeat-containing protein ATP4, chloroplastic (691 aa).

The segment covering 1 to 17 (MASLPLCRSPSSLLPSW) has biased composition (low complexity). The transit peptide at 1 to 35 (MASLPLCRSPSSLLPSWPHRPISASFNPKNPSSPV) directs the protein to the chloroplast. Residues 1–76 (MASLPLCRSP…SSNTRFLWVN (76 aa)) form a disordered region. Positions 24 to 33 (ASFNPKNPSS) are enriched in polar residues. Over residues 45–56 (PPQPQDPSPPSD) the composition is skewed to pro residues. Residues 61-76 (GTRPSSSSNTRFLWVN) are compositionally biased toward polar residues. 10 PPR repeats span residues 163–197 (KVIL…GVQP), 198–232 (DNAT…GCSP), 233–267 (DMLT…KWQL), 268–302 (DPVI…GVRP), 303–337 (NLVV…QVQP), 338–372 (SRAT…AMGI), 373–403 (DVML…MKAS), 411–445 (DSWS…GFKP), 446–480 (NIFV…GIIP), and 546–580 (KMPY…GIYA). A Smr domain is found at 592–677 (LHLRGLSVGA…WFLTTNVAAK (86 aa)).

The protein belongs to the PPR family. P subfamily.

The protein resides in the plastid. It localises to the chloroplast stroma. Functionally, involved in translation and accumulation of chloroplast ATP synthase subunits. Interacts with the 5'-UTR of the chloroplast bicistronic atpB and atpE mRNA and activates its translation by facilitating ribosome association with the mRNA. Required for accumulation and activity of the chloroplast ATP synthase. Enhances atpA translation and is required for accumulation of specific processed atpF and psaJ transcripts. Required for the stabilization of bicistronic rpl16 and rpl14 mRNAs. The protein is Pentatricopeptide repeat-containing protein ATP4, chloroplastic of Zea mays (Maize).